Reading from the N-terminus, the 335-residue chain is Glyceraldehyde-3-phosphate dehydrogenase (335 aa).

NAD(+)-binding positions include 11–12 (RI), aspartate 33, and lysine 78. Residues 148–150 (SST), threonine 179, 208–209 (TG), and arginine 231 contribute to the D-glyceraldehyde 3-phosphate site. Asparagine 313 contacts NAD(+).

This sequence belongs to the glyceraldehyde-3-phosphate dehydrogenase family. Homotetramer.

Its subcellular location is the cytoplasm. It carries out the reaction D-glyceraldehyde 3-phosphate + phosphate + NAD(+) = (2R)-3-phospho-glyceroyl phosphate + NADH + H(+). Its pathway is carbohydrate degradation; glycolysis; pyruvate from D-glyceraldehyde 3-phosphate: step 1/5. In Pleurotus sajor-caju (Oyster mushroom), this protein is Glyceraldehyde-3-phosphate dehydrogenase (GPD).